The following is a 155-amino-acid chain: MLKQVEIFTDGSCLGNPGPGGYGAIMRYGKHEKIFSAGFRLTTNNRMEMMAAIVALEALTQPCAVVLSTDSQYVRQGITSWIHNWKKRGWKTTDKKPVKNVDLWKRLDAALSHHDITWKWVKGHAGHVENERCDELARNAAGNPTLDDVGYTSEA.

The region spanning 1 to 142 (MLKQVEIFTD…CDELARNAAG (142 aa)) is the RNase H type-1 domain. Mg(2+)-binding residues include D10, E48, D70, and D134.

This sequence belongs to the RNase H family. In terms of assembly, monomer. It depends on Mg(2+) as a cofactor.

It localises to the cytoplasm. The enzyme catalyses Endonucleolytic cleavage to 5'-phosphomonoester.. Its function is as follows. Endonuclease that specifically degrades the RNA of RNA-DNA hybrids. This is Ribonuclease H from Erwinia tasmaniensis (strain DSM 17950 / CFBP 7177 / CIP 109463 / NCPPB 4357 / Et1/99).